A 357-amino-acid chain; its full sequence is tRNA N6-adenosine threonylcarbamoyltransferase (357 aa).

Fe cation-binding residues include histidine 115 and histidine 119. Substrate is bound by residues 137 to 141 (LASGG), aspartate 170, glycine 183, and asparagine 281. Fe cation is bound at residue aspartate 309.

Belongs to the KAE1 / TsaD family. The cofactor is Fe(2+).

The protein localises to the cytoplasm. It catalyses the reaction L-threonylcarbamoyladenylate + adenosine(37) in tRNA = N(6)-L-threonylcarbamoyladenosine(37) in tRNA + AMP + H(+). In terms of biological role, required for the formation of a threonylcarbamoyl group on adenosine at position 37 (t(6)A37) in tRNAs that read codons beginning with adenine. Is involved in the transfer of the threonylcarbamoyl moiety of threonylcarbamoyl-AMP (TC-AMP) to the N6 group of A37, together with TsaE and TsaB. TsaD likely plays a direct catalytic role in this reaction. The sequence is that of tRNA N6-adenosine threonylcarbamoyltransferase from Nitrobacter winogradskyi (strain ATCC 25391 / DSM 10237 / CIP 104748 / NCIMB 11846 / Nb-255).